Reading from the N-terminus, the 345-residue chain is Phosphoribosylformylglycinamidine cyclo-ligase (345 aa).

Belongs to the AIR synthase family.

It is found in the cytoplasm. The catalysed reaction is 2-formamido-N(1)-(5-O-phospho-beta-D-ribosyl)acetamidine + ATP = 5-amino-1-(5-phospho-beta-D-ribosyl)imidazole + ADP + phosphate + H(+). It functions in the pathway purine metabolism; IMP biosynthesis via de novo pathway; 5-amino-1-(5-phospho-D-ribosyl)imidazole from N(2)-formyl-N(1)-(5-phospho-D-ribosyl)glycinamide: step 2/2. The protein is Phosphoribosylformylglycinamidine cyclo-ligase of Escherichia coli (strain K12 / MC4100 / BW2952).